The following is a 305-amino-acid chain: Ribonuclease BN (305 aa).

H64, H66, D68, H69, H141, D212, and H270 together coordinate Zn(2+). D68 functions as the Proton acceptor in the catalytic mechanism.

It belongs to the RNase Z family. RNase BN subfamily. In terms of assembly, homodimer. Zn(2+) serves as cofactor.

Zinc phosphodiesterase, which has both exoribonuclease and endoribonuclease activities. In Salmonella paratyphi C (strain RKS4594), this protein is Ribonuclease BN.